The sequence spans 425 residues: Isocitrate dehydrogenase [NADP] (425 aa).

Residue T114 participates in NADP(+) binding. D-threo-isocitrate-binding residues include S123, N125, R129, R139, and R162. Residue D316 coordinates Mg(2+). NADP(+) is bound by residues 348-354 (HGTAPKY), N361, Y400, and R404.

The protein belongs to the isocitrate and isopropylmalate dehydrogenases family. In terms of assembly, homodimer. Mg(2+) is required as a cofactor. Requires Mn(2+) as cofactor.

The enzyme catalyses D-threo-isocitrate + NADP(+) = 2-oxoglutarate + CO2 + NADPH. Its function is as follows. Catalyzes the oxidative decarboxylation of isocitrate to 2-oxoglutarate and carbon dioxide with the concomitant reduction of NADP(+). The polypeptide is Isocitrate dehydrogenase [NADP] (icd) (Helicobacter pylori (strain ATCC 700392 / 26695) (Campylobacter pylori)).